Reading from the N-terminus, the 346-residue chain is NADH-ubiquinone oxidoreductase chain 2 (346 aa).

Helical transmembrane passes span 1 to 21 (MNPHATPVLVLSLALGTTITI), 25 to 45 (HWVLAWTGLEINTLAIIPLIS), 60 to 80 (FLTQAAASALVLFSSMTNAWA), 95 to 115 (CLLLTAAIAIKLGLVPFHFWF), 124 to 144 (LMTALLLSTLMKFPPLTLLLM), 149 to 169 (LNPALLTAMALASAALGGWMG), 178 to 195 (ILAFSSISHLGWIAIILV), 200 to 219 (LALLTFYLYTIMTSAVFMAL), 242 to 262 (ATLMLVLLSLAGLPPLTGFMP), 274 to 294 (EMTPAAMAIAMLSLLSLFFYL), and 326 to 346 (AILASLSILLLPLSPMIHAIV).

Belongs to the complex I subunit 2 family.

Its subcellular location is the mitochondrion inner membrane. The enzyme catalyses a ubiquinone + NADH + 5 H(+)(in) = a ubiquinol + NAD(+) + 4 H(+)(out). Functionally, core subunit of the mitochondrial membrane respiratory chain NADH dehydrogenase (Complex I) that is believed to belong to the minimal assembly required for catalysis. Complex I functions in the transfer of electrons from NADH to the respiratory chain. The immediate electron acceptor for the enzyme is believed to be ubiquinone. This chain is NADH-ubiquinone oxidoreductase chain 2 (MT-ND2), found in Anas acuta (Northern pintail).